The following is a 955-amino-acid chain: 2-oxoglutarate dehydrogenase E1 component (955 aa).

The protein belongs to the alpha-ketoglutarate dehydrogenase family. Homodimer. Part of the 2-oxoglutarate dehydrogenase (OGDH) complex composed of E1 (2-oxoglutarate dehydrogenase), E2 (dihydrolipoamide succinyltransferase) and E3 (dihydrolipoamide dehydrogenase); the complex contains multiple copies of the three enzymatic components (E1, E2 and E3). Thiamine diphosphate serves as cofactor.

The catalysed reaction is N(6)-[(R)-lipoyl]-L-lysyl-[protein] + 2-oxoglutarate + H(+) = N(6)-[(R)-S(8)-succinyldihydrolipoyl]-L-lysyl-[protein] + CO2. In terms of biological role, E1 component of the 2-oxoglutarate dehydrogenase (OGDH) complex which catalyzes the decarboxylation of 2-oxoglutarate, the first step in the conversion of 2-oxoglutarate to succinyl-CoA and CO(2). This chain is 2-oxoglutarate dehydrogenase E1 component, found in Bacillus cereus (strain ATCC 10987 / NRS 248).